We begin with the raw amino-acid sequence, 139 residues long: D-ribose pyranase (139 aa).

The active-site Proton donor is His20. Residues Asp28, His106, and 128 to 130 (YAN) each bind substrate.

Belongs to the RbsD / FucU family. RbsD subfamily. In terms of assembly, homodecamer.

It is found in the cytoplasm. It carries out the reaction beta-D-ribopyranose = beta-D-ribofuranose. Its pathway is carbohydrate metabolism; D-ribose degradation; D-ribose 5-phosphate from beta-D-ribopyranose: step 1/2. Its function is as follows. Catalyzes the interconversion of beta-pyran and beta-furan forms of D-ribose. This Vibrio campbellii (strain ATCC BAA-1116) protein is D-ribose pyranase.